We begin with the raw amino-acid sequence, 246 residues long: Breast cancer metastasis-suppressor 1 (246 aa).

Positions 1–57 are disordered; it reads MPVQPPSKDTEEMEAEGDSAAEMNGEEEESEEERSGSQTESEEESSEMDDEDYERRR. 2 stretches are compositionally biased toward acidic residues: residues 11-32 and 40-52; these read EEME…ESEE and ESEE…DDED. The stretch at 51-98 forms a coiled coil; it reads EDYERRRSECVSEMLDLEKQFSELKEKLFRERLSQLRLRLEEVGAERA. Residues Lys-184 and Lys-242 each participate in a glycyl lysine isopeptide (Lys-Gly) (interchain with G-Cter in SUMO2) cross-link.

The protein belongs to the BRMS1 family. Homohexamer (Potential). Interacts with SNX6, HDAC1 and RELA. Interacts with ARID4A. Identified in mSin3A corepressor complexes together with SIN3A, SIN3B, RBBP4, RBBP7, SAP30, SUDS3, ARID4A, HDAC1 and HDAC2. Interacts with SPOP; this recruits the protein to a ubiquitin ligase complex containing SPOP and CUL3. Ubiquitinated by a cullin-RING-based BCR (BTB-CUL3-RBX1) E3 ubiquitin-protein ligase complex containing SPOP, leading to proteasomal degradation. In terms of tissue distribution, expression levels are higher in term placentas than in early placentas. Low levels of expression observed in normal pregnancies and in molar pregnancies.

The protein localises to the nucleus. Its subcellular location is the cytoplasm. In terms of biological role, transcriptional repressor. Down-regulates transcription activation by NF-kappa-B by promoting the deacetylation of RELA at 'Lys-310'. Promotes HDAC1 binding to promoter regions. Down-regulates expression of anti-apoptotic genes that are controlled by NF-kappa-B. Promotes apoptosis in cells that have inadequate adherence to a substrate, a process called anoikis, and may thereby inhibit metastasis. May be a mediator of metastasis suppression in breast carcinoma. This is Breast cancer metastasis-suppressor 1 (BRMS1) from Homo sapiens (Human).